Consider the following 1038-residue polypeptide: Bone morphogenetic protein receptor type-2 (1038 aa).

The N-terminal stretch at 1 to 26 (MTSSLQRPWRVPWLPWTILLVSTAAA) is a signal peptide. Residues 27 to 150 (SQNQERLCAF…PPHSFNRDET (124 aa)) lie on the Extracellular side of the membrane. 5 disulfide bridges follow: Cys34/Cys66, Cys60/Cys84, Cys94/Cys117, Cys99/Cys116, and Cys118/Cys123. Asn55 carries an N-linked (GlcNAc...) asparagine glycan. N-linked (GlcNAc...) asparagine glycosylation is present at Asn110. Residue Asn126 is glycosylated (N-linked (GlcNAc...) asparagine). The chain crosses the membrane as a helical span at residues 151-171 (IIIALASVSVLAVLIVALCFG). The Cytoplasmic segment spans residues 172–1038 (YRMLTGDRKQ…VSKDIGMNCL (867 aa)). One can recognise a Protein kinase domain in the interval 203 to 504 (LKLLELIGRG…QCAEERMAEL (302 aa)). ATP-binding positions include 209–217 (IGRGRYGAV), Lys230, and 280–282 (EYY). The Proton acceptor role is filled by Asp333. ATP-binding positions include 337–338 (RN) and Asp351. Thr379 carries the phosphothreonine modification. Ser586 carries the post-translational modification Phosphoserine. Residues 593–626 (QAQARIPSPETSVTSLSTNTTTTNTTGLTPSTGM) form a disordered region. Over residues 603 to 626 (TSVTSLSTNTTTTNTTGLTPSTGM) the composition is skewed to low complexity. A phosphoserine mark is found at Ser680 and Ser681. Disordered stretches follow at residues 746–770 (PKQQ…KEPR) and 872–972 (RREQ…EKIK). Residues 872 to 896 (RREQQAGHDEGVLDRLVDRRERPLE) show a composition bias toward basic and acidic residues. Polar residues predominate over residues 937-964 (RPNSLDLSATNVLDGSSIQIGESTQDGK).

It belongs to the protein kinase superfamily. TKL Ser/Thr protein kinase family. TGFB receptor subfamily. In terms of assembly, interacts with GDF5. Interacts with BMP4. Interacts with SCUBE3. Interacts with TSC22D1/TSC-22. Interacts with activin A/INHBA. The cofactor is Mg(2+). It depends on Mn(2+) as a cofactor. As to expression, highly expressed in heart and liver.

The protein resides in the cell membrane. The catalysed reaction is L-threonyl-[receptor-protein] + ATP = O-phospho-L-threonyl-[receptor-protein] + ADP + H(+). The enzyme catalyses L-seryl-[receptor-protein] + ATP = O-phospho-L-seryl-[receptor-protein] + ADP + H(+). Functionally, on ligand binding, forms a receptor complex consisting of two type II and two type I transmembrane serine/threonine kinases. Type II receptors phosphorylate and activate type I receptors which autophosphorylate, then bind and activate SMAD transcriptional regulators. Can also mediate signaling through the activation of the p38MAPK cascade. Binds to BMP7, BMP2 and, less efficiently, BMP4. Binding is weak but enhanced by the presence of type I receptors for BMPs. Mediates induction of adipogenesis by GDF6. Promotes signaling also by binding to activin A/INHBA. The chain is Bone morphogenetic protein receptor type-2 (BMPR2) from Homo sapiens (Human).